The sequence spans 57 residues: Conotoxin Cal6.39 (57 aa).

Residues 1–18 (MSGTTVLLLTCLFLVTMA) form the signal peptide. 3 cysteine pairs are disulfide-bonded: Cys-22–Cys-36, Cys-29–Cys-46, and Cys-35–Cys-52.

In terms of tissue distribution, expressed by the venom duct.

It localises to the secreted. Functionally, probable neurotoxin. This chain is Conotoxin Cal6.39, found in Californiconus californicus (California cone).